The primary structure comprises 509 residues: O-acetyltransferase anaAT (509 aa).

It belongs to the fumigaclavine B O-acetyltransferase family. As to quaternary structure, monomer.

The catalysed reaction is (2R,3S,11R)-aszonalenin + acetyl-CoA = (2R,3S,11R)-acetylaszonalenin + CoA. It participates in alkaloid biosynthesis. Functionally, O-acetyltransferase; part of the gene cluster that mediates the biosynthesis of the prenylated pyrroloindoline diketopiperazine acetylaszonalenin. The first step in the pathway is the formation of (R)-benzodiazepinedione by condensation of tryptophan and anthranilic acid catalyzed by the non-ribosomal peptide synthetase anaPS. The prenyltransferase anaPT then converts (R)-benzodiazepinedione to aszonalenin in the presence of dimethylallyl diphosphate (DMAPP) via C3-prenylation. The last step in the biosynthesis of acetylaszonalenin via acetylation of aszonalenin at position N1 catalyzed by anaAT. The polypeptide is O-acetyltransferase anaAT (Neosartorya fischeri (strain ATCC 1020 / DSM 3700 / CBS 544.65 / FGSC A1164 / JCM 1740 / NRRL 181 / WB 181) (Aspergillus fischerianus)).